Reading from the N-terminus, the 143-residue chain is Putative pre-16S rRNA nuclease (143 aa).

This sequence belongs to the YqgF nuclease family.

The protein resides in the cytoplasm. Functionally, could be a nuclease involved in processing of the 5'-end of pre-16S rRNA. This chain is Putative pre-16S rRNA nuclease, found in Marinobacter nauticus (strain ATCC 700491 / DSM 11845 / VT8) (Marinobacter aquaeolei).